We begin with the raw amino-acid sequence, 72 residues long: Hydrophobic protein OSR8 (72 aa).

The next 2 membrane-spanning stretches (helical) occupy residues 9 to 29 (FLEI…RFGC) and 39 to 59 (LLTI…LVAL).

It belongs to the UPF0057 (PMP3) family.

Its subcellular location is the membrane. The protein is Hydrophobic protein OSR8 (OSR8) of Oryza sativa subsp. japonica (Rice).